A 908-amino-acid chain; its full sequence is Protein translocase subunit SecA (908 aa).

ATP contacts are provided by residues Gln87, Gly105–Thr109, and Asp512. The segment at Gly865–Ser908 is disordered. The span at Met879 to Arg888 shows a compositional bias: basic and acidic residues. Cys892, Cys894, Cys903, and His904 together coordinate Zn(2+). Positions Arg898 to Ser908 are enriched in basic residues.

The protein belongs to the SecA family. In terms of assembly, monomer and homodimer. Part of the essential Sec protein translocation apparatus which comprises SecA, SecYEG and auxiliary proteins SecDF-YajC and YidC. It depends on Zn(2+) as a cofactor.

The protein resides in the cell inner membrane. The protein localises to the cytoplasm. It carries out the reaction ATP + H2O + cellular proteinSide 1 = ADP + phosphate + cellular proteinSide 2.. Part of the Sec protein translocase complex. Interacts with the SecYEG preprotein conducting channel. Has a central role in coupling the hydrolysis of ATP to the transfer of proteins into and across the cell membrane, serving both as a receptor for the preprotein-SecB complex and as an ATP-driven molecular motor driving the stepwise translocation of polypeptide chains across the membrane. In Shewanella sp. (strain MR-4), this protein is Protein translocase subunit SecA.